The following is a 480-amino-acid chain: MVSTSKIKSVDFYRKIPRDLTEASLSGAGLSIIAALSMIFLFGMELNNYLAVSTSTSVIVDRSADGDFLRLDFNISFPSLSCEFASVDVSDVLGTNRLNVTKTIRKFSIDSNMRPTGSEFHAGEVLSLINHGDETGEEIVEDSVPLTGRNFDTFTHQFPILVVNFYAPWCYWCNLLKPSWEKAAKQIKERYDPEMDGRVILAKVDCTQEGDLCRRNHIQGYPSIRIFRKGSDLKDDNAHHDHESYYGDRDTESLVKMVVSLVEPIHLEPHNLALEDKSDNSSRTLKKAPSTGGCRVEGYMRVKKVPGNLMVSARSGSHSFDSSQMNMSHVVNHLSFGRRIMPQKFSEFKRLSPYLGLSHDRLDGRSFINQRDLGPNVTIEHYLQIVKTEVVKSNGQALVEAYEYTAHSSVAHSYYLPVAKFHFELSPMQVLITENSKSFSHFITNVCAIIGGVFTVAGILDSILHHSMTLMKKIELGKNF.

N-linked (GlcNAc...) asparagine glycans are attached at residues asparagine 74 and asparagine 99. The region spanning phenylalanine 120–glutamate 263 is the Thioredoxin domain. Active-site nucleophile residues include cysteine 170 and cysteine 173. Cysteine 170 and cysteine 173 form a disulfide bridge. Asparagine 280, asparagine 326, and asparagine 376 each carry an N-linked (GlcNAc...) asparagine glycan. A helical transmembrane segment spans residues phenylalanine 439–isoleucine 459.

This sequence belongs to the protein disulfide isomerase family. As to expression, widely expressed.

It localises to the membrane. Acts as a protein-folding catalyst that interacts with nascent polypeptides to catalyze the formation, isomerization, and reduction or oxidation of disulfide bonds. This chain is Protein disulfide-isomerase 5-4 (PDIL5-4), found in Arabidopsis thaliana (Mouse-ear cress).